The primary structure comprises 421 residues: Ankyrin repeat and SOCS box protein 6 (421 aa).

ANK repeat units lie at residues 67 to 97 (EGVSNALLKMAELGLTRAADVLLRHGANLNF), 102 to 131 (TYYTALHIAVLRNQPDMVELLVHHGADINR), 136 to 166 (HESSPLDLASEEPERLPCLQRLLDLGADVNA), 170 to 205 (HGKTALLHALASSDGVQIHNTENIRLLLEGGADVKA), 226 to 255 (GGDKEEAQMINRFCFQVTRLLLAHGADPSE), and 260 to 289 (ESLTHICLKSFKLHFPLLRFLLESGAAYNC). In terms of domain architecture, SOCS box spans 360–415 (ALHFSLRQLESYPPPLKHLCRVAIRLYLQPWPVDVKVKALPLPDRLKWYLLSEHSG).

This sequence belongs to the ankyrin SOCS box (ASB) family. Binds APS. Identified in a complex with ELOB and ELOC. Interacts with CUL5 and RNF7. Interacts with SQSTM1.

It is found in the cytoplasm. It participates in protein modification; protein ubiquitination. Functionally, probable substrate-recognition component of a SCF-like ECS (Elongin-Cullin-SOCS-box protein) E3 ubiquitin-protein ligase complex which mediates the ubiquitination and subsequent proteasomal degradation of target proteins. May play a role in the regulation of cell proliferation and autophagy by promoting the ubiquitination and degradation of SQSTM1. The protein is Ankyrin repeat and SOCS box protein 6 (ASB6) of Pongo abelii (Sumatran orangutan).